The chain runs to 269 residues: tRNA pseudouridine synthase A (269 aa).

D51 acts as the Nucleophile in catalysis. Residue Y109 participates in substrate binding.

This sequence belongs to the tRNA pseudouridine synthase TruA family. In terms of assembly, homodimer.

It carries out the reaction uridine(38/39/40) in tRNA = pseudouridine(38/39/40) in tRNA. Its function is as follows. Formation of pseudouridine at positions 38, 39 and 40 in the anticodon stem and loop of transfer RNAs. The polypeptide is tRNA pseudouridine synthase A (Histophilus somni (strain 129Pt) (Haemophilus somnus)).